A 480-amino-acid polypeptide reads, in one-letter code: Vacuolar amino acid transporter 2 (480 aa).

A disordered region spans residues 21-48 (LTNFPFPGTTDNDSDDGSQGQNSLNIIT). Residues 37–46 (GSQGQNSLNI) are compositionally biased toward polar residues. 9 consecutive transmembrane segments (helical) span residues 72–92 (AFMNLANSILGAGIITQPFAI), 95–115 (AGILGGLLSYVALGFIVDWTL), 145–165 (LILFTNGLFAFGGCIGYCIII), 214–234 (LSKASFLAVISMIIIVLTVVI), 263–283 (LSVISFALVCHHNTSFIFFSM), 297–317 (ISIIISVICCALMGYSGFAVF), 338–358 (IARLCFGFNMLTTFPMEIFVL), 394–414 (VFITMGISLTTCNLGALFELI), and 447–467 (FYLCICFGFMIMIISSTQTII).

This sequence belongs to the amino acid/polyamine transporter 2 family.

It localises to the vacuole membrane. Its function is as follows. Probable amino acid transporter of unknown specificity. This is Vacuolar amino acid transporter 2 (AVT2) from Saccharomyces cerevisiae (strain ATCC 204508 / S288c) (Baker's yeast).